Consider the following 121-residue polypeptide: MRNWRWLLLVLAVLLAWLQYRFWFGPGNSGEVMMLEAQVAHQTQDNEGLRQRNQALAAEVKDLKDGEAAIEERARSELGMIKPGETFYRVVEDAPLPAPASPETAAPAQQAPASTDPVDHP.

The Cytoplasmic portion of the chain corresponds to 1 to 6 (MRNWRW). The helical transmembrane segment at 7-24 (LLLVLAVLLAWLQYRFWF) threads the bilayer. Residues 25 to 121 (GPGNSGEVMM…PASTDPVDHP (97 aa)) lie on the Periplasmic side of the membrane. Residues 31-66 (EVMMLEAQVAHQTQDNEGLRQRNQALAAEVKDLKDG) are a coiled coil. The tract at residues 94-121 (APLPAPASPETAAPAQQAPASTDPVDHP) is disordered. The segment covering 101 to 121 (SPETAAPAQQAPASTDPVDHP) has biased composition (low complexity).

It belongs to the FtsB family. In terms of assembly, part of a complex composed of FtsB, FtsL and FtsQ.

It is found in the cell inner membrane. Essential cell division protein. May link together the upstream cell division proteins, which are predominantly cytoplasmic, with the downstream cell division proteins, which are predominantly periplasmic. The chain is Cell division protein FtsB from Xanthomonas oryzae pv. oryzae (strain MAFF 311018).